The sequence spans 104 residues: MKYAIIEASGKQFWVEPGRFYDFNSLNVEPGDKIALTRVLLINDNGNITVGKPCLDNVKVEATVLGHLRGQKVTVYKMQPKKKTRKKQGHRTNLTRLLIDNIIN.

The protein belongs to the bacterial ribosomal protein bL21 family. In terms of assembly, part of the 50S ribosomal subunit.

It is found in the plastid. It localises to the chloroplast. Its function is as follows. This protein binds to 23S rRNA. In Guillardia theta (Cryptophyte), this protein is Large ribosomal subunit protein bL21c.